The chain runs to 317 residues: NAC domain-containing protein 19 (317 aa).

Positions 14-162 (LPPGFRFYPT…DWVLCRIYKK (149 aa)) constitute an NAC domain.

As to quaternary structure, dimer. Interacts with RHA2A, RHA2B or RHG1A, but not with RHA3A or RHA3B. In terms of tissue distribution, expressed in stems, flowers, cauline leaves and rosettes.

It is found in the nucleus. Its function is as follows. Transcription factors that bind specifically to the 5'-CATGTG-3' motif. The chain is NAC domain-containing protein 19 (NAC019) from Arabidopsis thaliana (Mouse-ear cress).